The chain runs to 337 residues: Glyceraldehyde-3-phosphate dehydrogenase 1, cytosolic (337 aa).

Residues 13–14, Asp-35, and Arg-82 contribute to the NAD(+) site; that span reads RI. D-glyceraldehyde 3-phosphate is bound by residues 153-155, Thr-184, 213-214, and Arg-236; these read SCT and TG. Cys-154 functions as the Nucleophile in the catalytic mechanism. Asn-318 contributes to the NAD(+) binding site.

Belongs to the glyceraldehyde-3-phosphate dehydrogenase family. Homotetramer.

It is found in the cytoplasm. The enzyme catalyses D-glyceraldehyde 3-phosphate + phosphate + NAD(+) = (2R)-3-phospho-glyceroyl phosphate + NADH + H(+). It participates in carbohydrate degradation; glycolysis; pyruvate from D-glyceraldehyde 3-phosphate: step 1/5. Functionally, key enzyme in glycolysis that catalyzes the first step of the pathway by converting D-glyceraldehyde 3-phosphate (G3P) into 3-phospho-D-glyceroyl phosphate. Essential for the maintenance of cellular ATP levels and carbohydrate metabolism. The sequence is that of Glyceraldehyde-3-phosphate dehydrogenase 1, cytosolic (GAPC) from Hordeum vulgare (Barley).